Reading from the N-terminus, the 354-residue chain is Guanine nucleotide-binding protein G(o) subunit alpha (354 aa).

Glycine 2 carries N-myristoyl glycine lipidation. The S-palmitoyl cysteine moiety is linked to residue cysteine 3. Residues lysine 32–tyrosine 354 enclose the G-alpha domain. The G1 motif stretch occupies residues lysine 35–threonine 48. GTP contacts are provided by residues glycine 40–serine 47, leucine 176–threonine 182, aspartate 201–glutamine 205, asparagine 270–aspartate 273, and alanine 326. Residues serine 47 and threonine 182 each coordinate Mg(2+). Residues aspartate 174 to threonine 182 are G2 motif. A G3 motif region spans residues phenylalanine 197 to arginine 206. Positions isoleucine 266 to aspartate 273 are G4 motif. Positions threonine 324 to threonine 329 are G5 motif.

It belongs to the G-alpha family. G(i/o/t/z) subfamily. G proteins are composed of 3 units; alpha, beta and gamma. The alpha chain contains the guanine nucleotide binding site. Interacts (in GDP-bound form) with gpr-1; gpr-1 forms a complex with gpr-2 and lin-5. Interacts (in GDP-bound form) with gpb-1. Interacts (in GDP-bound form) with gbas-1 (via GBA motif); the interaction leads to activation of goa-1. As to expression, expressed in the ASER neuron and the intestine.

Guanine nucleotide-binding proteins (G proteins) are involved as modulators or transducers in various transmembrane signaling systems. In the 1-cell embryo, probably together with gpa-16, controls nuclear rotation and spindle elongation during mitosis. During the first embryonic cell divisions, plays a role in gpr-1/2 cortical localization and in the proper orientation of EMS blastomere mitotic spindle. Polarity determinants (par genes) may regulate lin-5/gpr-1/gpr-2/goa-1 locally to create the asymmetric forces that drive spindle movement. Involved in chemosensory responses to attractive and repellent odors detected by AWC and AWB sensory neurons, respectively. In ASER neurons, acts downstream of glr-3 to regulate cold avoidance behavior via calcium signaling, and it may also play a role in sensing cold in the intestine. Negatively regulates axon regeneration after injury downstream of the inhibitory compound arachidonoyl ethanolamide (AEA) by antagonizing the activation of the JNK pathway (mlk-1/mek-1/kgb-1). In neurons, may negatively regulate diacylglycerol (DAG) production mediated by egl-30 signaling cascade and thereby negatively regulates acetylcholine release. Couples to the muscarinic acetylcholine receptor gar-2 to negatively regulate cholinergic receptor activity in the presence of high levels of acetylcholine in ventral cord motor neurons. Plays a role in the navigational capacity of sperm and the targeting of sperm derived from males to the fertilization site in the uterus of hermaphrodites. Involved in egg-laying and in regulating dopamine-mediated locomotion. Most likely couples to the dopamine receptors dop-2 and dop-3 to positively regulate the dopamine-mediated suppression of crh-1/CREB1 transcription factor activation in cholinergic SIA neurons in the presence of food. The chain is Guanine nucleotide-binding protein G(o) subunit alpha from Caenorhabditis elegans.